Consider the following 486-residue polypeptide: MELRDLIGALEAPMLMGADNVDITNIQSDSRRVTKGSLFVAVRGTAVDGHAYMDSAIEKGAVAIVCEETPSYLEGRCSFIVVKDSAEALGLLVSRWYGDPSRKLMLVGVTGTNGKTTIATLLYEMFRKMGHKVGLLSTVCNYIDGEAVPTDHTTPDPLTLHSLMARMVEAGCEYAFMEVSSHSIDQRRISGLSFDGGIFTNLTRDHLDYHKTVENYLKAKKKFFDDLPAGTFALTNADDKSGLVMLQNTKAKKLTYSLRTLADFKGKILESHFEGTDLIINGREVMVHFVGRFNAYNLLAVYGAAVSLGKDPEEVLIVLSTLRSVSGRFETIQSPLGYTAIVDYAHTPDALTNVLNGIHEVLDGKGRIITVVGAGGNRDKGKRPLMAKEAVKLSDQVILTSDNPRFEEPDDIINDMVAGLTKMDMERTLCITDRTQAIKTATMLAKKGDVILVAGKGHEDYQEIKGVKQHFDDREKLREIFSTQQS.

UDP-N-acetyl-alpha-D-muramoyl-L-alanyl-D-glutamate is bound at residue serine 30. ATP is bound at residue 111-117 (GTNGKTT). UDP-N-acetyl-alpha-D-muramoyl-L-alanyl-D-glutamate contacts are provided by residues 153 to 154 (TT), serine 180, glutamine 186, and arginine 188. Residue lysine 220 is modified to N6-carboxylysine. Residues arginine 378, 402-405 (DNPR), glycine 455, and glutamate 459 each bind meso-2,6-diaminopimelate. The Meso-diaminopimelate recognition motif signature appears at 402–405 (DNPR).

It belongs to the MurCDEF family. MurE subfamily. Requires Mg(2+) as cofactor. Carboxylation is probably crucial for Mg(2+) binding and, consequently, for the gamma-phosphate positioning of ATP.

The protein resides in the cytoplasm. The enzyme catalyses UDP-N-acetyl-alpha-D-muramoyl-L-alanyl-D-glutamate + meso-2,6-diaminopimelate + ATP = UDP-N-acetyl-alpha-D-muramoyl-L-alanyl-gamma-D-glutamyl-meso-2,6-diaminopimelate + ADP + phosphate + H(+). It participates in cell wall biogenesis; peptidoglycan biosynthesis. Functionally, catalyzes the addition of meso-diaminopimelic acid to the nucleotide precursor UDP-N-acetylmuramoyl-L-alanyl-D-glutamate (UMAG) in the biosynthesis of bacterial cell-wall peptidoglycan. This Parabacteroides distasonis (strain ATCC 8503 / DSM 20701 / CIP 104284 / JCM 5825 / NCTC 11152) protein is UDP-N-acetylmuramoyl-L-alanyl-D-glutamate--2,6-diaminopimelate ligase.